The following is a 264-amino-acid chain: tRNA1(Val) (adenine(37)-N6)-methyltransferase (264 aa).

Belongs to the methyltransferase superfamily. tRNA (adenine-N(6)-)-methyltransferase family.

It localises to the cytoplasm. It carries out the reaction adenosine(37) in tRNA1(Val) + S-adenosyl-L-methionine = N(6)-methyladenosine(37) in tRNA1(Val) + S-adenosyl-L-homocysteine + H(+). Functionally, specifically methylates the adenine in position 37 of tRNA(1)(Val) (anticodon cmo5UAC). This chain is tRNA1(Val) (adenine(37)-N6)-methyltransferase, found in Shewanella pealeana (strain ATCC 700345 / ANG-SQ1).